A 152-amino-acid chain; its full sequence is UPF0266 membrane protein YobD (152 aa).

Transmembrane regions (helical) follow at residues 6–26 (LVLILFIAALLAYALYDQFIM), 45–65 (VDSVIFVGLVAILIYNNVTSH), and 67–87 (AQMTTWLLSALALMGFYIFWI).

This sequence belongs to the UPF0266 family.

Its subcellular location is the cell inner membrane. The sequence is that of UPF0266 membrane protein YobD from Salmonella arizonae (strain ATCC BAA-731 / CDC346-86 / RSK2980).